Here is a 171-residue protein sequence, read N- to C-terminus: Putative lipoprotein LppO (171 aa).

The N-terminal stretch at 1–28 is a signal peptide; that stretch reads MTDPRHTVRIAVGATALGVSALGATLPA. The N-palmitoyl cysteine moiety is linked to residue Cys29. Cys29 carries the S-diacylglycerol cysteine lipid modification.

It is found in the cell membrane. This Mycobacterium tuberculosis (strain CDC 1551 / Oshkosh) protein is Putative lipoprotein LppO (lppO).